We begin with the raw amino-acid sequence, 376 residues long: Fructose-1,6-bisphosphate aldolase/phosphatase (376 aa).

The active-site Proton acceptor; for FBP phosphatase activity is Asp11. Mg(2+) contacts are provided by Asp11, His18, Asp49, and Asp50. His18 contacts beta-D-fructose 1,6-bisphosphate. His18 contacts dihydroxyacetone phosphate. Tyr87 is a beta-D-fructose 1,6-bisphosphate binding site. Gln91 is a Mg(2+) binding site. 100–101 (GN) is a beta-D-fructose 1,6-bisphosphate binding site. Mg(2+) is bound at residue Asp128. Beta-D-fructose 1,6-bisphosphate is bound at residue Lys129. Residue Lys129 participates in dihydroxyacetone phosphate binding. The active-site Proton donor/acceptor; for FBP aldolase activity is Tyr224. Mg(2+) is bound by residues Lys227, Asp228, and Asp229. Lys227 acts as the Schiff-base intermediate with DHAP; for FBP aldolase activity in catalysis. Residues 237–238 (QK), Arg261, and Tyr342 contribute to the beta-D-fructose 1,6-bisphosphate site. Arg261 serves as a coordination point for dihydroxyacetone phosphate. The interval 357 to 376 (MVPLKDSGPAGTGRAYEDPD) is disordered.

The protein belongs to the FBP aldolase/phosphatase family. Homooctamer; dimer of tetramers. It depends on Mg(2+) as a cofactor.

The enzyme catalyses beta-D-fructose 1,6-bisphosphate + H2O = beta-D-fructose 6-phosphate + phosphate. The catalysed reaction is beta-D-fructose 1,6-bisphosphate = D-glyceraldehyde 3-phosphate + dihydroxyacetone phosphate. The protein operates within carbohydrate biosynthesis; gluconeogenesis. Its function is as follows. Catalyzes two subsequent steps in gluconeogenesis: the aldol condensation of dihydroxyacetone phosphate (DHAP) and glyceraldehyde-3-phosphate (GA3P) to fructose-1,6-bisphosphate (FBP), and the dephosphorylation of FBP to fructose-6-phosphate (F6P). The protein is Fructose-1,6-bisphosphate aldolase/phosphatase of Cenarchaeum symbiosum (strain A).